The primary structure comprises 186 residues: Elongation factor P (186 aa).

It belongs to the elongation factor P family.

It localises to the cytoplasm. It functions in the pathway protein biosynthesis; polypeptide chain elongation. In terms of biological role, involved in peptide bond synthesis. Stimulates efficient translation and peptide-bond synthesis on native or reconstituted 70S ribosomes in vitro. Probably functions indirectly by altering the affinity of the ribosome for aminoacyl-tRNA, thus increasing their reactivity as acceptors for peptidyl transferase. The polypeptide is Elongation factor P (Prochlorococcus marinus (strain MIT 9215)).